We begin with the raw amino-acid sequence, 1517 residues long: DNA-directed RNA polymerase subunit beta' (1517 aa).

The Zn(2+) site is built by cysteine 71, cysteine 73, cysteine 86, and cysteine 89. The Mg(2+) site is built by aspartate 482, aspartate 484, and aspartate 486. Residues cysteine 812, cysteine 886, cysteine 893, and cysteine 896 each contribute to the Zn(2+) site.

The protein belongs to the RNA polymerase beta' chain family. As to quaternary structure, the RNAP catalytic core consists of 2 alpha, 1 beta, 1 beta' and 1 omega subunit. When a sigma factor is associated with the core the holoenzyme is formed, which can initiate transcription. Mg(2+) serves as cofactor. Requires Zn(2+) as cofactor.

The enzyme catalyses RNA(n) + a ribonucleoside 5'-triphosphate = RNA(n+1) + diphosphate. Functionally, DNA-dependent RNA polymerase catalyzes the transcription of DNA into RNA using the four ribonucleoside triphosphates as substrates. The polypeptide is DNA-directed RNA polymerase subunit beta' (Campylobacter jejuni subsp. jejuni serotype O:6 (strain 81116 / NCTC 11828)).